Reading from the N-terminus, the 303-residue chain is UDP-N-acetylenolpyruvoylglucosamine reductase (303 aa).

The FAD-binding PCMH-type domain maps to 23 to 188; that stretch reads KVGGPADYLV…ISAKFALKPG (166 aa). Arg-167 is a catalytic residue. Catalysis depends on Ser-217, which acts as the Proton donor. Glu-287 is a catalytic residue.

This sequence belongs to the MurB family. Requires FAD as cofactor.

Its subcellular location is the cytoplasm. It catalyses the reaction UDP-N-acetyl-alpha-D-muramate + NADP(+) = UDP-N-acetyl-3-O-(1-carboxyvinyl)-alpha-D-glucosamine + NADPH + H(+). Its pathway is cell wall biogenesis; peptidoglycan biosynthesis. Functionally, cell wall formation. The protein is UDP-N-acetylenolpyruvoylglucosamine reductase of Streptococcus uberis (strain ATCC BAA-854 / 0140J).